The primary structure comprises 784 residues: Phosphate transporter PHO1 homolog 1 (784 aa).

Residues 1-387 (MVKFTKQFEG…HHRKESHSVT (387 aa)) are Cytoplasmic-facing. The SPX domain maps to 2-335 (VKFTKQFEGQ…GKQILPIYLK (334 aa)). The chain crosses the membrane as a helical span at residues 388–408 (FFIGLFTGCFVALLAGYIIVA). The Extracellular segment spans residues 409–429 (HLTGMYRQHSANTFYMETAYP). Residues 430-450 (VLSMFGLLFLHLFLYGCNIFM) traverse the membrane as a helical segment. Residues 451 to 474 (WRKARINYSFIFELGSKNELKYRD) lie on the Cytoplasmic side of the membrane. The chain crosses the membrane as a helical span at residues 475-495 (VFLICTASMSAIAGVMFVHLS). At 496–507 (LLEKGYSFRQVQ) the chain is on the extracellular side. Residues 508-528 (VIPGLLLLGFLLILICPLNIF) form a helical membrane-spanning segment. At 529–654 (YKSSRYRLIS…TKVAYEKERS (126 aa)) the chain is on the cytoplasmic side. Residues 593–784 (MRVKYYRDLA…LPFREVDEED (192 aa)) form the EXS domain. A helical transmembrane segment spans residues 655-675 (LGWLCLVVAMSSVATIYQLYW). At 676 to 703 (DFVKDWGLLQHNSNNPWLRNQLMLRQKS) the chain is on the extracellular side. The chain crosses the membrane as a helical span at residues 704–724 (IYYFSMVLNLVLRLAWLQTVL). At 725–784 (HSSFEHVDYRVTGLFLAALEVIRRGQWNFYRLENEHLNNAGKFRAVKTVPLPFREVDEED) the chain is on the cytoplasmic side.

The protein belongs to the SYG1 (TC 2.A.94) family. In terms of tissue distribution, expressed in vascular cylinder of roots, leaves, stems, petals, sepals and filaments. Expressed in receptacle, stigma apex and anther connective tissue.

The protein localises to the cell membrane. Its function is as follows. Contributes to the loading of inorganic phosphate (Pi) into the root xylem vessels. This chain is Phosphate transporter PHO1 homolog 1 (PHO1-H1), found in Arabidopsis thaliana (Mouse-ear cress).